Here is a 414-residue protein sequence, read N- to C-terminus: TAR DNA-binding protein 43 (414 aa).

Residues K79, K84, K95, K102, and K181 each participate in a glycyl lysine isopeptide (Lys-Gly) (interchain with G-Cter in SUMO2) cross-link. RRM domains follow at residues 104 to 200 and 191 to 262; these read SDLI…RCTE and RKVF…NAEP. Phosphoserine is present on S183. Positions 216–414 are interaction with UBQLN2; that stretch reads DVMDVFIPKP…MDSKSSGWGM (199 aa). The segment covering 261–274 has biased composition (basic and acidic residues); that stretch reads EPKHNSNRQLERSG. Disordered regions lie at residues 261 to 303 and 341 to 373; these read EPKH…GNNQ and ASQQNQSGPSGNNQNQGNMQREPNQAFGSGNNS. K263 is covalently cross-linked (Glycyl lysine isopeptide (Lys-Gly) (interchain with G-Cter in SUMO2)). Positions 275–303 are enriched in gly residues; that stretch reads RFGGNPGGFGNQGGFGNSRGGGAGLGNNQ. Phosphoserine is present on S292. R293 is modified (omega-N-methylarginine). Over residues 342 to 358 the composition is skewed to low complexity; it reads SQQNQSGPSGNNQNQGN.

Monomer and component of the SFPQ-NONO complex, which is probably a heterotetramer of two 52 kDa (NONO) and two 100 kDa (SFPQ) subunits. NONO is a component of spliceosome and U5.4/6 snRNP complexes. Interacts with CPNE4 (via VWFA domain). Forms heterodimers with PSPC1; this involves formation of a coiled coil domain by helices from both proteins. Part of complex consisting of SFPQ, NONO and MATR3. Part of a complex consisting of SFPQ, NONO and NR5A1. Part of a complex consisting of SFPQ, NONO and TOP1. Interacts with SPI1. Interacts with RNF43. Interacts with PER1 and PER2. Part of the HDP-RNP complex composed of at least HEXIM1, PRKDC, XRCC5, XRCC6, paraspeckle proteins (SFPQ, NONO, PSPC1, RBM14, and MATR3) and NEAT1 RNA. Interacts (via second RRM domain) with WASL; the interaction is direct. Component of a multiprotein complex with WASL and SFPQ. Interacts with ERCC6. Interacts (via DNA-binding domain) with TET1. In terms of processing, hyperphosphorylated. Post-translationally, ubiquitinated.

It localises to the nucleus. It is found in the nucleolus. Its subcellular location is the nucleus speckle. The protein resides in the chromosome. The protein localises to the mitochondrion. Its function is as follows. DNA- and RNA binding protein, involved in several nuclear processes. Binds the conventional octamer sequence in double-stranded DNA. Also binds single-stranded DNA and RNA at a site independent of the duplex site. Involved in pre-mRNA splicing, probably as a heterodimer with SFPQ. Interacts with U5 snRNA, probably by binding to a purine-rich sequence located on the 3' side of U5 snRNA stem 1b. Together with PSPC1, required for the formation of nuclear paraspeckles. The SFPQ-NONO heteromer associated with MATR3 may play a role in nuclear retention of defective RNAs. The SFPQ-NONO heteromer may be involved in DNA unwinding by modulating the function of topoisomerase I/TOP1. The SFPQ-NONO heteromer may be involved in DNA non-homologous end joining (NHEJ) required for double-strand break repair and V(D)J recombination and may stabilize paired DNA ends. In vitro, the complex strongly stimulates DNA end joining, binds directly to the DNA substrates and cooperates with the Ku70/G22P1-Ku80/XRCC5 (Ku) dimer to establish a functional preligation complex. NONO is involved in transcriptional regulation. The SFPQ-NONO-NR5A1 complex binds to the CYP17 promoter and regulates basal and cAMP-dependent transcriptional activity. NONO binds to an enhancer element in long terminal repeats of endogenous intracisternal A particles (IAPs) and activates transcription. Regulates the circadian clock by repressing the transcriptional activator activity of the CLOCK-BMAL1 heterodimer. Important for the functional organization of GABAergic synapses. Plays a specific and important role in the regulation of synaptic RNAs and GPHN/gephyrin scaffold structure, through the regulation of GABRA2 transcript. Plays a key role during neuronal differentiation by recruiting TET1 to genomic loci and thereby regulating 5-hydroxymethylcytosine levels. Plays a role in the regulation of DNA virus-mediated innate immune response by assembling into the HDP-RNP complex, a complex that serves as a platform for IRF3 phosphorylation and subsequent innate immune response activation through the cGAS-STING pathway. The protein is TAR DNA-binding protein 43 (TARDBP) of Pongo abelii (Sumatran orangutan).